Consider the following 555-residue polypeptide: Alpha-copaene synthase (555 aa).

5 residues coordinate Mg(2+): D312, D316, D452, S456, and E460. The DDXXD motif motif lies at 312–316 (DDTYD).

It belongs to the terpene synthase family. Requires Mg(2+) as cofactor. In terms of tissue distribution, mainly expressed in sunflower trichomes.

It carries out the reaction (2E,6E)-farnesyl diphosphate = alpha-copaene + diphosphate. The catalysed reaction is (2E,6E)-farnesyl diphosphate = alpha-muurolene + diphosphate. The enzyme catalyses (2E,6E)-farnesyl diphosphate = alpha-humulene + diphosphate. It participates in secondary metabolite biosynthesis; terpenoid biosynthesis. Involved in the biosynthesis of germacrene-derived sesquiterpene lactones. Catalyzes the cyclization of farnesyl diphosphate to alpha-copaene, delta-cadinene, alpha-muurolene, beta-caryophyllene and alpha-humulene. This chain is Alpha-copaene synthase (CS), found in Helianthus annuus (Common sunflower).